A 362-amino-acid chain; its full sequence is Probable protein phosphatase 2C 11 (362 aa).

Residues 23 to 329 form the PPM-type phosphatase domain; the sequence is KLGLSSMQGW…DNMTMVLVQF (307 aa). 4 residues coordinate Mn(2+): D57, G58, D272, and D320.

It belongs to the PP2C family. The cofactor is Mg(2+). Mn(2+) is required as a cofactor.

It catalyses the reaction O-phospho-L-seryl-[protein] + H2O = L-seryl-[protein] + phosphate. The enzyme catalyses O-phospho-L-threonyl-[protein] + H2O = L-threonyl-[protein] + phosphate. This Oryza sativa subsp. japonica (Rice) protein is Probable protein phosphatase 2C 11.